The following is a 192-amino-acid chain: PTS-dependent dihydroxyacetone kinase, ADP-binding subunit DhaL (192 aa).

The 185-residue stretch at 5–189 (DTTIEWLGKF…SAYLFETLLE (185 aa)) folds into the DhaL domain. Residues Asp-29, Asp-34, and Asp-36 each coordinate Mg(2+). ADP contacts are provided by residues 37 to 40 (HGAN), 78 to 79 (AS), Gly-115, Met-124, Arg-161, and 174 to 176 (DPG).

In terms of assembly, homodimer. The dihydroxyacetone kinase complex is composed of a homodimer of DhaM, a homodimer of DhaK and the subunit DhaL. It depends on Mg(2+) as a cofactor.

It is found in the cytoplasm. The catalysed reaction is dihydroxyacetone + phosphoenolpyruvate = dihydroxyacetone phosphate + pyruvate. It participates in polyol metabolism; glycerol degradation. Its function is as follows. ADP-binding subunit of the dihydroxyacetone kinase, which is responsible for the phosphoenolpyruvate (PEP)-dependent phosphorylation of dihydroxyacetone. DhaL-ADP is converted to DhaL-ATP via a phosphoryl group transfer from DhaM and transmits it to dihydroxyacetone binds to DhaK. The sequence is that of PTS-dependent dihydroxyacetone kinase, ADP-binding subunit DhaL from Lactococcus lactis subsp. lactis (strain IL1403) (Streptococcus lactis).